The chain runs to 182 residues: Large ribosomal subunit protein uL16 (182 aa).

The protein belongs to the universal ribosomal protein uL16 family.

The protein is Large ribosomal subunit protein uL16 of Pyrobaculum arsenaticum (strain DSM 13514 / JCM 11321 / PZ6).